Reading from the N-terminus, the 158-residue chain is Small ribosomal subunit protein uS7 (158 aa).

The protein belongs to the universal ribosomal protein uS7 family. Part of the 30S ribosomal subunit. Contacts proteins S9 and S11.

Its function is as follows. One of the primary rRNA binding proteins, it binds directly to 16S rRNA where it nucleates assembly of the head domain of the 30S subunit. Is located at the subunit interface close to the decoding center, probably blocks exit of the E-site tRNA. In Christiangramia forsetii (strain DSM 17595 / CGMCC 1.15422 / KT0803) (Gramella forsetii), this protein is Small ribosomal subunit protein uS7.